The chain runs to 302 residues: Nodulation protein D 3 (302 aa).

The HTH lysR-type domain occupies 6–63 (LDLNLLVALDALMIERNLTAAARSINLSQPAMSAAVRRLRSYFRDELFTMRGREFVPT). The segment at residues 23 to 42 (LTAAARSINLSQPAMSAAVR) is a DNA-binding region (H-T-H motif).

This sequence belongs to the LysR transcriptional regulatory family.

Its function is as follows. NodD regulates the expression of the nodABCFE genes which encode other nodulation proteins. NodD is also a negative regulator of its own expression. Binds flavonoids as inducers. The sequence is that of Nodulation protein D 3 (nodD3) from Rhizobium leguminosarum bv. phaseoli.